The primary structure comprises 436 residues: UPF0597 protein YhaM (436 aa).

The protein belongs to the UPF0597 family.

The polypeptide is UPF0597 protein YhaM (Escherichia coli O139:H28 (strain E24377A / ETEC)).